The following is a 385-amino-acid chain: 1-deoxy-D-xylulose 5-phosphate reductoisomerase (385 aa).

NADPH contacts are provided by Thr-13, Gly-14, Ser-15, Ile-16, Asn-40, and Asn-122. Lys-123 contributes to the 1-deoxy-D-xylulose 5-phosphate binding site. Glu-124 contributes to the NADPH binding site. Asp-148 is a Mn(2+) binding site. 4 residues coordinate 1-deoxy-D-xylulose 5-phosphate: Ser-149, Glu-150, Ser-177, and His-200. Glu-150 contributes to the Mn(2+) binding site. Residue Gly-206 coordinates NADPH. 1-deoxy-D-xylulose 5-phosphate is bound by residues Ser-213, Asn-218, Lys-219, and Glu-222. Glu-222 contributes to the Mn(2+) binding site.

This sequence belongs to the DXR family. Requires Mg(2+) as cofactor. It depends on Mn(2+) as a cofactor.

It carries out the reaction 2-C-methyl-D-erythritol 4-phosphate + NADP(+) = 1-deoxy-D-xylulose 5-phosphate + NADPH + H(+). It participates in isoprenoid biosynthesis; isopentenyl diphosphate biosynthesis via DXP pathway; isopentenyl diphosphate from 1-deoxy-D-xylulose 5-phosphate: step 1/6. In terms of biological role, catalyzes the NADPH-dependent rearrangement and reduction of 1-deoxy-D-xylulose-5-phosphate (DXP) to 2-C-methyl-D-erythritol 4-phosphate (MEP). In Francisella tularensis subsp. holarctica (strain FTNF002-00 / FTA), this protein is 1-deoxy-D-xylulose 5-phosphate reductoisomerase.